The sequence spans 667 residues: Long-chain-fatty-acid--CoA ligase ACSBG2 (667 aa).

ATP contacts are provided by residues 227 to 235 (TSGTTGTPK), 418 to 423 (EIYGMS), Asp-496, Arg-511, and Arg-624.

The protein belongs to the ATP-dependent AMP-binding enzyme family. Bubblegum subfamily. As to expression, testis- and brainstem-specific. Expressed in pubertal and adult testis. Enriched in germ cells and Sertoli cells while present at a lower level in Leydig cells. Present in testicular Sertoli cells and large motoneurons in the medulla oblongata and cervical spinal cord (at protein level).

The protein localises to the cytoplasm. The protein resides in the membrane. It catalyses the reaction a long-chain fatty acid + ATP + CoA = a long-chain fatty acyl-CoA + AMP + diphosphate. The enzyme catalyses (5Z,8Z,11Z,14Z)-eicosatetraenoate + ATP + CoA = (5Z,8Z,11Z,14Z)-eicosatetraenoyl-CoA + AMP + diphosphate. It carries out the reaction hexadecanoate + ATP + CoA = hexadecanoyl-CoA + AMP + diphosphate. The catalysed reaction is (9Z)-octadecenoate + ATP + CoA = (9Z)-octadecenoyl-CoA + AMP + diphosphate. It catalyses the reaction (9Z,12Z)-octadecadienoate + ATP + CoA = (9Z,12Z)-octadecadienoyl-CoA + AMP + diphosphate. The enzyme catalyses tetracosanoate + ATP + CoA = tetracosanoyl-CoA + AMP + diphosphate. Catalyzes the conversion of fatty acids such as long chain and very long-chain fatty acids to their active form acyl-CoAs for both synthesis of cellular lipids, and degradation via beta-oxidation. Can activate diverse saturated, monosaturated and polyunsaturated fatty acids. Has increased ability to activate oleic and linoleic acid. May play a role in spermatogenesis. This chain is Long-chain-fatty-acid--CoA ligase ACSBG2, found in Mus musculus (Mouse).